Reading from the N-terminus, the 386-residue chain is Methionine aminotransferase (386 aa).

K236 bears the N6-(pyridoxal phosphate)lysine mark.

It belongs to the class-I pyridoxal-phosphate-dependent aminotransferase family. In terms of assembly, homodimer. The cofactor is pyridoxal 5'-phosphate.

It localises to the cytoplasm. The enzyme catalyses a 2-oxocarboxylate + L-methionine = 4-methylsulfanyl-2-oxobutanoate + an L-alpha-amino acid. Its function is as follows. Shows aminotransferase activity with methionine and histidine as substrates, and to a lesser extent also with phenylalanine. This Escherichia coli (strain K12) protein is Methionine aminotransferase (ybdL).